Consider the following 708-residue polypeptide: F-box protein MAX2 homolog A (708 aa).

The region spanning 2–49 is the F-box domain; it reads ATQLNDLPDVILSNIIAAVTDVRSRNSTSFVCRKWLVLERSTRVSLTL.

As to quaternary structure, part of a putative SCF (SKP1/Cullin/F-box) ubiquitin ligase complex. Interacts with DAD2. Interacts with KAI2IA in the presence of (-)-germacrene D. In terms of tissue distribution, mainly expressed in fully expanded leaves, lateral roots, axillary and shoot apex, and, to a lower extent, in internodes and nodes.

The protein localises to the nucleus. Its function is as follows. Component of SCF(ASK-cullin-F-box) E3 ubiquitin ligase complexes, which may mediate the ubiquitination and subsequent proteasomal degradation of target proteins. Is necessary for responses to strigolactones and may be involved in the ubiquitin-mediated degradation of specific proteins that activate axillary growth. Targets probably SMAX1A to degradation upon the formation of an E3 SCF ubiquitin ligase complex (ASK-cullin-F-box) containing MAX2A and KAI2IA in response to (-)-germacrene D in the stigma. The polypeptide is F-box protein MAX2 homolog A (Petunia hybrida (Petunia)).